Consider the following 346-residue polypeptide: Glucose-6-phosphatase 3 (346 aa).

Over 1 to 24 the chain is Lumenal; that stretch reads MESTLGAGIAMAEALQNQLPWLEN. The helical transmembrane segment at 25–45 threads the bilayer; that stretch reads VWLWVTFLGDPKSLFLFYFPA. Residues 46–54 lie on the Cytoplasmic side of the membrane; that stretch reads AYYASRRVG. Residues 55–75 traverse the membrane as a helical segment; it reads IAVLWISLITEWLNLVFKWFL. The Lumenal segment spans residues 76–108; it reads FGDRPFWWVHESGYYSQAPAQVHQFPSSCETGP. Position 79 (arginine 79) interacts with substrate. The chain crosses the membrane as a helical span at residues 109-129; it reads GSPSGHCMITGAALWPIMTAV. Histidine 114 functions as the Proton donor in the catalytic mechanism. The Cytoplasmic portion of the chain corresponds to 130 to 140; sequence SSQMATRAHSR. A helical transmembrane segment spans residues 141–162; the sequence is WVRVIPSLAYCTFLLAVGLSRV. Arginine 161 provides a ligand contact to substrate. At 163–167 the chain is on the lumenal side; the sequence is FLLAH. Residue histidine 167 is the Nucleophile of the active site. A helical transmembrane segment spans residues 168–186; that stretch reads FPHQVLAGLITGAVLGWLM. Topologically, residues 187 to 197 are cytoplasmic; it reads TPQVPMERELS. A helical membrane pass occupies residues 198–218; sequence FYGLTSLALLLGASLIYWTLF. The Lumenal portion of the chain corresponds to 219 to 254; sequence TLGLDLSWSINLASKWCERPEWVHLDSRPFASLSRD. The chain crosses the membrane as a helical span at residues 255–273; it reads SGAALGLGIALHSPCYAQV. Topologically, residues 274-283 are cytoplasmic; it reads RRAHLGYGQK. A helical membrane pass occupies residues 284-304; the sequence is LVCLVLAMGLLGPLNWLGYPP. Topologically, residues 305 to 307 are lumenal; that stretch reads QIS. A helical membrane pass occupies residues 308–328; sequence LFYIFNFLKYTLWPCLVLALV. The Cytoplasmic segment spans residues 329-346; that stretch reads PWLVHMFSAQEAPPIRSS.

The protein belongs to the glucose-6-phosphatase family.

The protein resides in the endoplasmic reticulum membrane. The catalysed reaction is D-glucose 6-phosphate + H2O = D-glucose + phosphate. It functions in the pathway carbohydrate biosynthesis; gluconeogenesis. Its activity is regulated as follows. Inhibited by vanadate. Its function is as follows. Hydrolyzes glucose-6-phosphate to glucose in the endoplasmic reticulum. May form with the glucose-6-phosphate transporter (SLC37A4/G6PT) a ubiquitously expressed complex responsible for glucose production through glycogenolysis and gluconeogenesis. Probably required for normal neutrophil function. This Bos taurus (Bovine) protein is Glucose-6-phosphatase 3 (G6PC3).